Reading from the N-terminus, the 87-residue chain is Small ribosomal subunit protein uS19m (87 aa).

The protein belongs to the universal ribosomal protein uS19 family.

The protein resides in the mitochondrion. This chain is Small ribosomal subunit protein uS19m (mrps19), found in Dictyostelium citrinum (Slime mold).